Here is a 388-residue protein sequence, read N- to C-terminus: Xylose isomerase (388 aa).

Catalysis depends on residues His-54 and Asp-57. Glu-181, Glu-217, His-220, Asp-245, Asp-255, Asp-257, and Asp-287 together coordinate Mg(2+).

Belongs to the xylose isomerase family. Homotetramer. Mg(2+) is required as a cofactor.

It localises to the cytoplasm. The enzyme catalyses alpha-D-xylose = alpha-D-xylulofuranose. The protein is Xylose isomerase of Streptomyces thermocyaneoviolaceus.